Reading from the N-terminus, the 33-residue chain is GFCAQKGIKCHDIHCCTNLKCVREGSNRVCRKA.

Disulfide bonds link C3–C16, C10–C21, and C15–C30.

In terms of tissue distribution, expressed by the venom gland.

Its subcellular location is the secreted. Functionally, non-toxic to mice. This Phoneutria nigriventer (Brazilian armed spider) protein is U23-ctenitoxin-Pn1a.